Here is a 218-residue protein sequence, read N- to C-terminus: Octanoyltransferase (218 aa).

The region spanning 32–218 (GDAPEAVWLL…LRTFSRSFPD (187 aa)) is the BPL/LPL catalytic domain. Substrate contacts are provided by residues 71–78 (RGGQYTYH), 151–153 (AIG), and 164–166 (GLS). Cysteine 182 functions as the Acyl-thioester intermediate in the catalytic mechanism.

This sequence belongs to the LipB family.

The protein resides in the cytoplasm. The enzyme catalyses octanoyl-[ACP] + L-lysyl-[protein] = N(6)-octanoyl-L-lysyl-[protein] + holo-[ACP] + H(+). Its pathway is protein modification; protein lipoylation via endogenous pathway; protein N(6)-(lipoyl)lysine from octanoyl-[acyl-carrier-protein]: step 1/2. Its function is as follows. Catalyzes the transfer of endogenously produced octanoic acid from octanoyl-acyl-carrier-protein onto the lipoyl domains of lipoate-dependent enzymes. Lipoyl-ACP can also act as a substrate although octanoyl-ACP is likely to be the physiological substrate. This chain is Octanoyltransferase, found in Cereibacter sphaeroides (strain ATCC 17025 / ATH 2.4.3) (Rhodobacter sphaeroides).